Reading from the N-terminus, the 252-residue chain is Imidazole glycerol phosphate synthase subunit HisF (252 aa).

Residues Asp11 and Asp130 contribute to the active site.

The protein belongs to the HisA/HisF family. Heterodimer of HisH and HisF.

It is found in the cytoplasm. It carries out the reaction 5-[(5-phospho-1-deoxy-D-ribulos-1-ylimino)methylamino]-1-(5-phospho-beta-D-ribosyl)imidazole-4-carboxamide + L-glutamine = D-erythro-1-(imidazol-4-yl)glycerol 3-phosphate + 5-amino-1-(5-phospho-beta-D-ribosyl)imidazole-4-carboxamide + L-glutamate + H(+). It participates in amino-acid biosynthesis; L-histidine biosynthesis; L-histidine from 5-phospho-alpha-D-ribose 1-diphosphate: step 5/9. In terms of biological role, IGPS catalyzes the conversion of PRFAR and glutamine to IGP, AICAR and glutamate. The HisF subunit catalyzes the cyclization activity that produces IGP and AICAR from PRFAR using the ammonia provided by the HisH subunit. The sequence is that of Imidazole glycerol phosphate synthase subunit HisF from Streptococcus sanguinis (strain SK36).